The chain runs to 357 residues: Quinolinate synthase (357 aa).

Histidine 50 and serine 71 together coordinate iminosuccinate. Cysteine 116 contacts [4Fe-4S] cluster. Iminosuccinate is bound by residues 142–144 (YAN) and serine 159. Position 203 (cysteine 203) interacts with [4Fe-4S] cluster. Iminosuccinate is bound by residues 229 to 231 (HPE) and threonine 246. Cysteine 300 contributes to the [4Fe-4S] cluster binding site.

It belongs to the quinolinate synthase family. Type 1 subfamily. The cofactor is [4Fe-4S] cluster.

Its subcellular location is the cytoplasm. The catalysed reaction is iminosuccinate + dihydroxyacetone phosphate = quinolinate + phosphate + 2 H2O + H(+). It participates in cofactor biosynthesis; NAD(+) biosynthesis; quinolinate from iminoaspartate: step 1/1. In terms of biological role, catalyzes the condensation of iminoaspartate with dihydroxyacetone phosphate to form quinolinate. The polypeptide is Quinolinate synthase (Shewanella sp. (strain MR-4)).